The sequence spans 122 residues: Large ribosomal subunit protein bL12 (122 aa).

It belongs to the bacterial ribosomal protein bL12 family. In terms of assembly, homodimer. Part of the ribosomal stalk of the 50S ribosomal subunit. Forms a multimeric L10(L12)X complex, where L10 forms an elongated spine to which 2 to 4 L12 dimers bind in a sequential fashion. Binds GTP-bound translation factors.

In terms of biological role, forms part of the ribosomal stalk which helps the ribosome interact with GTP-bound translation factors. Is thus essential for accurate translation. In Vibrio vulnificus (strain CMCP6), this protein is Large ribosomal subunit protein bL12.